An 802-amino-acid chain; its full sequence is Leucine--tRNA ligase (802 aa).

A 'HIGH' region motif is present at residues 41-52; the sequence is PYPSGQGLHVGH. The 'KMSKS' region motif lies at 580-584; sequence KMSKS. Lysine 583 lines the ATP pocket.

The protein belongs to the class-I aminoacyl-tRNA synthetase family.

It is found in the cytoplasm. It carries out the reaction tRNA(Leu) + L-leucine + ATP = L-leucyl-tRNA(Leu) + AMP + diphosphate. In Alkaliphilus oremlandii (strain OhILAs) (Clostridium oremlandii (strain OhILAs)), this protein is Leucine--tRNA ligase.